The following is a 386-amino-acid chain: MATTNSFTILIFMILATTSSTFATLGEMVTVLSIDGGGIKGIIPATILEFLEGQLQEVDNNTDARLADYFDVIGGTSTGGLLTAMITTPNETNRPFAAAKDIVPFYFEHGPKIFQSSGSIFGPKYDGKYLMQVLQEKLGETRVHQALTEVAISSFDIKTNKPVIFTKSNLAKSPELDAKMYDICYSTAAAPTFFPPHYFATNTSNGDKYEFNLVDGAVATVDDPALLSISVATKLAQVDPKFASIKSLNYKQMLLLSLGTGTTSEFDKTYTAEETAKWGTARWMLVIQKMTSAASSYMTDYYLSTAFQALDSQNNYLRVQENALTGTTTELDDASEANMQLLVQVGEDLLKKSVSKDNPETYEEALKRFAKLLSDRKKLRANKASY.

The N-terminal stretch at 1–23 is a signal peptide; sequence MATTNSFTILIFMILATTSSTFA. Residues 32–229 enclose the PNPLA domain; sequence LSIDGGGIKG…TVDDPALLSI (198 aa). A GXGXXG motif is present at residues 36–41; that stretch reads GGGIKG. N-linked (GlcNAc...) asparagine glycosylation is present at N60. Positions 75–79 match the GXSXG motif; that stretch reads GTSTG. S77 (nucleophile) is an active-site residue. N-linked (GlcNAc...) asparagine glycans are attached at residues N90 and N202. The active-site Proton acceptor is D215. A DGA/G motif is present at residues 215–217; it reads DGA.

The protein belongs to the patatin family. Post-translationally, N-glycosylated. In terms of tissue distribution, tuber and stolon.

It localises to the vacuole. Functionally, probable lipolytic acyl hydrolase (LAH), an activity which is thought to be involved in the response of tubers to pathogens. The protein is Patatin-T5 of Solanum tuberosum (Potato).